The following is a 718-amino-acid chain: MAARAQIKLLPEMFQSNGCASLEDTKSTVSKVQTRTERFQERVRKHIDENYSEFMTNHTSPDIFLEESSSLGREINDLLETVGTEGLAALNGSSTQLADHSRELRELMLGLQVSEHILKIDELFQCVEEAKGTKDYLVVLDLVGRLRSLIYGEGEAATQDVVRIFQALECYETIKVKYHVQAHLLQQNMQERFDRLVQLNCKSFPNSKCVTLLVSKEEGQLHDIVIALFQERYNPVRLCEFLLENCIEPLILKPVGVECNENAEAGTYVQLSLSYSTKESGTASGTSTQLRPNYKQVLEHFRLLLQTLSGINHSLSSSQHVFSIIGDHVKDRMMHLLVNDCLIPAVPETMEEYQASTLCEDVAHFEQYLADSFLINPEVDRGLSQFIEQYGTYYRNRLCSRVLESTREIIQRDLQDMVLVAPNNQAMDVTGCDPFLFPRCMVSRSAQDFMKLMERILRQPTEKPGEDEADPLAGVIGMMLQTYIDEVPKVHKKLLESIPQQSVLFHNNCMYFTHWVAQNANKGIESFPALVKTLQATGTMHFRVQVTYQTSILMDIMESFEFESPHTLGTGPLKLVRQCLRQLELLKNVWQNVLPDNVYNSTFVELLHAFINELVRHIFTQRDISATMASDLSDLIDVVLEKAPKLFRDPHEVHQVRSWMKLQQLKTMMNASLKEITELWCKGAGPLTANYKADEIRYLIRALFQDTDRRAKAITQIM.

This sequence belongs to the ZW10 family.

The protein resides in the cytoplasm. It is found in the nucleus. It localises to the chromosome. Its subcellular location is the centromere. The protein localises to the kinetochore. In terms of biological role, required for accurate chromosome segregation. This is Centromere/kinetochore protein zw10 (mit(1)15) from Drosophila pseudoobscura pseudoobscura (Fruit fly).